The following is a 67-amino-acid chain: Bowman-Birk type major trypsin inhibitor (67 aa).

Disulfide bonds link C8–C63, C9–C24, C14–C22, C31–C38, and C35–C51.

This sequence belongs to the Bowman-Birk serine protease inhibitor family.

The protein is Bowman-Birk type major trypsin inhibitor of Setaria italica (Foxtail millet).